The chain runs to 502 residues: Hexokinase-2 (502 aa).

A helical transmembrane segment spans residues 4 to 24 (VAVATTVVCSVAVCAAAALIV). One can recognise a Hexokinase domain in the interval 35 to 487 (ARVIEILKAF…SGVGAALLAA (453 aa)). The segment at 90-228 (SGDETGFFYA…GLDMLVAALV (139 aa)) is hexokinase small subdomain. ADP-binding residues include Gly-104, Thr-105, and Asn-106. Residues Thr-194, Lys-195, Asn-229, and Asp-230 each coordinate D-glucose. Positions 229–476 (NDTIGTLAGG…ESVEVILSND (248 aa)) are hexokinase large subdomain. Thr-253 is an ADP binding site. Positions 256, 284, and 315 each coordinate D-glucose. Gly-441 provides a ligand contact to ADP.

The protein belongs to the hexokinase family. As to expression, highly expressed in siliques, at intermediate levels in roots and flowers, and at lower levels in stems, rosette and cauline leaves.

The protein localises to the mitochondrion outer membrane. It catalyses the reaction a D-hexose + ATP = a D-hexose 6-phosphate + ADP + H(+). The enzyme catalyses D-fructose + ATP = D-fructose 6-phosphate + ADP + H(+). The catalysed reaction is D-glucose + ATP = D-glucose 6-phosphate + ADP + H(+). It participates in carbohydrate metabolism; hexose metabolism. The protein operates within carbohydrate degradation; glycolysis; D-glyceraldehyde 3-phosphate and glycerone phosphate from D-glucose: step 1/4. Its function is as follows. Fructose and glucose phosphorylating enzyme. May be involved in the phosphorylation of glucose during the export from mitochondrion to cytosol. Acts as a sugar sensor which may regulate sugar-dependent gene repression or activation. Mediates the effects of sugar on plant growth and development independently of its catalytic activity or the sugar metabolism. May regulate the execution of program cell death in plant cells. The chain is Hexokinase-2 (HXK2) from Arabidopsis thaliana (Mouse-ear cress).